The chain runs to 1342 residues: DNA-directed RNA polymerase subunit beta (1342 aa).

It belongs to the RNA polymerase beta chain family. The RNAP catalytic core consists of 2 alpha, 1 beta, 1 beta' and 1 omega subunit. When a sigma factor is associated with the core the holoenzyme is formed, which can initiate transcription.

It carries out the reaction RNA(n) + a ribonucleoside 5'-triphosphate = RNA(n+1) + diphosphate. In terms of biological role, DNA-dependent RNA polymerase catalyzes the transcription of DNA into RNA using the four ribonucleoside triphosphates as substrates. This chain is DNA-directed RNA polymerase subunit beta, found in Salmonella gallinarum (strain 287/91 / NCTC 13346).